Here is a 494-residue protein sequence, read N- to C-terminus: Probable cytosol aminopeptidase (494 aa).

The Mn(2+) site is built by K260 and D265. Residue K272 is part of the active site. Mn(2+) contacts are provided by D283, D342, and E344. R346 is an active-site residue.

The protein belongs to the peptidase M17 family. Mn(2+) serves as cofactor.

Its subcellular location is the cytoplasm. The catalysed reaction is Release of an N-terminal amino acid, Xaa-|-Yaa-, in which Xaa is preferably Leu, but may be other amino acids including Pro although not Arg or Lys, and Yaa may be Pro. Amino acid amides and methyl esters are also readily hydrolyzed, but rates on arylamides are exceedingly low.. It catalyses the reaction Release of an N-terminal amino acid, preferentially leucine, but not glutamic or aspartic acids.. Its function is as follows. Presumably involved in the processing and regular turnover of intracellular proteins. Catalyzes the removal of unsubstituted N-terminal amino acids from various peptides. In Bacillus thuringiensis subsp. konkukian (strain 97-27), this protein is Probable cytosol aminopeptidase.